A 1694-amino-acid polypeptide reads, in one-letter code: Homeobox-DDT domain protein RLT2 (1694 aa).

Residues 1–24 (MEGGSEKTTPEGCGGESKSKRKMK) are disordered. The homeobox DNA-binding region spans 17-76 (SKSKRKMKTAAQLEVLENTYSAEPYPSEAIRADLSVKLNLSDRQLQMWFCHRRLKERKST). A DDT domain is found at 514–573 (DENVANLLMVWRFLITFADVLGLWPFTLDEFAQAFHDYDPRLMGEIHIVLLKTIIKDIEG). An HTH HARE-type domain is found at 696–765 (GTVKFAAFHV…APSTYCVRAS (70 aa)). Acidic residues predominate over residues 795 to 816 (EDVDDAERDEDSESDVGEDPEV). Disordered regions lie at residues 795 to 822 (EDVD…NLKK), 1450 to 1541 (KQEE…ICNE), 1555 to 1639 (AKTS…MNMK), and 1655 to 1674 (EDSY…AATR). Phosphoserine is present on residues S806 and S808. Positions 1459–1470 (GLGGVSSSGRGG) are enriched in gly residues. 2 stretches are compositionally biased toward basic residues: residues 1471–1485 (RPPR…RGNG) and 1515–1531 (GGRK…RKRP). Acidic residues-rich tracts occupy residues 1561–1578 (DNDD…DDGE), 1589–1605 (EDYD…DFDG), and 1624–1635 (DEYEEEEEEEED).

Interacts with CHR11. Interacts (via the DDT domain) with CHR11 (via C-terminus). In terms of tissue distribution, highly expressed in growing tissues such as inflorescence and flower meristems, young leaves and floral organs. Expressed in roots, rosette and cauline leaves, stems, flowers, inflorescences and siliques.

It is found in the nucleus. In terms of biological role, transcriptional regulator required for the maintenance of the plant vegetative phase. In association with CHR11 or CHR17 may prevent the early activation of the vegetative-to-reproductive transition by regulating key genes that contribute to flower timing, such as FT, SEP1, SEP3, AGL8/FUL, SOC1 and FLC. Involved in the transcriptional regulation of seed-specific gene expression. This Arabidopsis thaliana (Mouse-ear cress) protein is Homeobox-DDT domain protein RLT2.